Consider the following 372-residue polypeptide: Nucleosome assembly protein 1;1 (372 aa).

Residues 26-80 (VNALKNKLQNLAGQRSDVLENLTPNVRKRVDALRDIQSQHDELEAKFREERAILE) are a coiled coil. Serine 41 carries the phosphoserine modification. The short motif at 47 to 62 (LTPNVRKRVDALRDIQ) is the Nuclear export signal element. The short motif at 223 to 228 (KKKPKK) is the Nuclear localization signal element. Residues 299–372 (AMEAEDFEID…DERPPECKQQ (74 aa)) are disordered. Residues 300–337 (MEAEDFEIDDDEEDDIDEDEDEEDEEDEEDDDDEDEEE) show a composition bias toward acidic residues. Over residues 360-372 (GKQDERPPECKQQ) the composition is skewed to basic and acidic residues. Position 369 is a cysteine methyl ester (cysteine 369). Cysteine 369 carries the S-farnesyl cysteine lipid modification. The propeptide at 370–372 (KQQ) is removed in mature form.

This sequence belongs to the nucleosome assembly protein (NAP) family. As to quaternary structure, can form homomeric and heteromeric protein complexes with NAP1;2, NAP1;3 and NAP1;4. Binds histone H2A. Interacts with PP438/PNM1. Prenylation of the protein is required for its function during the cell proliferation phase of leaf development. Ubiquitous.

The protein resides in the nucleus. It localises to the cytoplasm. In terms of biological role, may modulate chromatin structure by regulation of nucleosome assembly/disassembly. Contributes to the regulation of cell proliferation and cell expansion. May function in nucleotide excision repair (NER). Involved in somatic homologous recombination. The sequence is that of Nucleosome assembly protein 1;1 (NAP1;1) from Arabidopsis thaliana (Mouse-ear cress).